A 140-amino-acid chain; its full sequence is Putative nickel-responsive regulator 2 (140 aa).

His-81, His-92, His-94, and Cys-100 together coordinate Ni(2+).

Belongs to the transcriptional regulatory CopG/NikR family. Ni(2+) is required as a cofactor.

Functionally, transcriptional regulator. The sequence is that of Putative nickel-responsive regulator 2 from Methanosarcina acetivorans (strain ATCC 35395 / DSM 2834 / JCM 12185 / C2A).